An 89-amino-acid chain; its full sequence is Cell division topological specificity factor (89 aa).

Belongs to the MinE family.

Functionally, prevents the cell division inhibition by proteins MinC and MinD at internal division sites while permitting inhibition at polar sites. This ensures cell division at the proper site by restricting the formation of a division septum at the midpoint of the long axis of the cell. This Janthinobacterium sp. (strain Marseille) (Minibacterium massiliensis) protein is Cell division topological specificity factor.